We begin with the raw amino-acid sequence, 624 residues long: tRNA uridine 5-carboxymethylaminomethyl modification enzyme MnmG (624 aa).

FAD contacts are provided by residues 13–18 (GGGHAG), valine 125, and serine 180. Residue 273 to 287 (GPRYCPSIEDKIVRF) participates in NAD(+) binding. An FAD-binding site is contributed by glutamine 370.

It belongs to the MnmG family. In terms of assembly, homodimer. Heterotetramer of two MnmE and two MnmG subunits. The cofactor is FAD.

It localises to the cytoplasm. Functionally, NAD-binding protein involved in the addition of a carboxymethylaminomethyl (cmnm) group at the wobble position (U34) of certain tRNAs, forming tRNA-cmnm(5)s(2)U34. This chain is tRNA uridine 5-carboxymethylaminomethyl modification enzyme MnmG, found in Legionella pneumophila (strain Lens).